A 131-amino-acid polypeptide reads, in one-letter code: Monothiol glutaredoxin-S6 (131 aa).

The Glutaredoxin domain occupies 31–131; that stretch reads SAFVQNAIYS…KLLGNSQSQR (101 aa). A [2Fe-2S] cluster-binding site is contributed by Cys51.

This sequence belongs to the glutaredoxin family. CPYC subfamily.

It localises to the cytoplasm. In terms of biological role, may only reduce GSH-thiol disulfides, but not protein disulfides. This Oryza sativa subsp. japonica (Rice) protein is Monothiol glutaredoxin-S6 (GRXS6).